The following is a 208-amino-acid chain: Small ribosomal subunit protein uS4 (208 aa).

The S4 RNA-binding domain occupies 98 to 159 (RRLDNVVYRL…KSRNVAAISE (62 aa)).

This sequence belongs to the universal ribosomal protein uS4 family. In terms of assembly, part of the 30S ribosomal subunit. Contacts protein S5. The interaction surface between S4 and S5 is involved in control of translational fidelity.

In terms of biological role, one of the primary rRNA binding proteins, it binds directly to 16S rRNA where it nucleates assembly of the body of the 30S subunit. Its function is as follows. With S5 and S12 plays an important role in translational accuracy. The protein is Small ribosomal subunit protein uS4 of Trichlorobacter lovleyi (strain ATCC BAA-1151 / DSM 17278 / SZ) (Geobacter lovleyi).